The chain runs to 323 residues: DNA-directed RNA polymerase subunit alpha 1 (323 aa).

The alpha N-terminal domain (alpha-NTD) stretch occupies residues Met1 to Arg228. Positions Ile244 to Lys323 are alpha C-terminal domain (alpha-CTD).

It belongs to the RNA polymerase alpha chain family. Homodimer. The RNAP catalytic core consists of 2 alpha, 1 beta, 1 beta' and 1 omega subunit. When a sigma factor is associated with the core the holoenzyme is formed, which can initiate transcription.

The enzyme catalyses RNA(n) + a ribonucleoside 5'-triphosphate = RNA(n+1) + diphosphate. Functionally, DNA-dependent RNA polymerase catalyzes the transcription of DNA into RNA using the four ribonucleoside triphosphates as substrates. This chain is DNA-directed RNA polymerase subunit alpha 1, found in Francisella tularensis subsp. novicida (strain U112).